Reading from the N-terminus, the 79-residue chain is Acyl carrier protein (79 aa).

One can recognise a Carrier domain in the interval 2–77 (SDIEARVKKI…LAIDYAKNNV (76 aa)). Serine 37 is modified (O-(pantetheine 4'-phosphoryl)serine).

The protein belongs to the acyl carrier protein (ACP) family. In terms of processing, 4'-phosphopantetheine is transferred from CoA to a specific serine of apo-ACP by AcpS. This modification is essential for activity because fatty acids are bound in thioester linkage to the sulfhydryl of the prosthetic group.

The protein localises to the cytoplasm. It functions in the pathway lipid metabolism; fatty acid biosynthesis. Its function is as follows. Carrier of the growing fatty acid chain in fatty acid biosynthesis. This is Acyl carrier protein from Leptothrix cholodnii (strain ATCC 51168 / LMG 8142 / SP-6) (Leptothrix discophora (strain SP-6)).